The following is a 299-amino-acid chain: Ribosomal RNA small subunit methyltransferase H (299 aa).

S-adenosyl-L-methionine contacts are provided by residues 35-37 (GGH), Asp54, Tyr80, Asp101, and Gln108.

The protein belongs to the methyltransferase superfamily. RsmH family.

It localises to the cytoplasm. The catalysed reaction is cytidine(1402) in 16S rRNA + S-adenosyl-L-methionine = N(4)-methylcytidine(1402) in 16S rRNA + S-adenosyl-L-homocysteine + H(+). Its function is as follows. Specifically methylates the N4 position of cytidine in position 1402 (C1402) of 16S rRNA. This Coprothermobacter proteolyticus (strain ATCC 35245 / DSM 5265 / OCM 4 / BT) protein is Ribosomal RNA small subunit methyltransferase H.